The chain runs to 1184 residues: MSNNINFNKNPDSSVSISKMDVIIPFTPDVPCDNNGQRMWWAFLASSMVTFFGGLFIILLWRTLKYLWTVCCHCNIKNKEAQKVNNPITIQADGTTKTGNEKEEAPASEVGWMTSVKDWAGVMISAQTLTGRVLVVLVFALSIGALGIYFIDSSDPIESCQNFYKDFTLQIDMAFNVFFLLYFGLRFIAANDKLWFWLEVNSVVDFFTVPPVFVSVYLNRSWLGLRFLRALRLIQFSEILQFLNILKTSNSIKLVNLCSIFISTWLTAAGFIHLVENSGDPWENFQNSQPLSYWECVYLLMVTMSTVGYGDVYARTTLGRLFMVFFILGGLAMFASYVPEIIELIGNRKKYGGSYSAVNGRKHIVVCGHITLESVSNFLKDFLHKDRDDVNVEIVFLHNISPNLELEALFKRHFTQVEFYQGSVLNPHDLARVKIESADACLILANKYCADPDAEDASNIMRVISIKNYHPKIRIITQMLQYHNKAHLLNIPSWNWKEGDDAICLAELKAGFIAQSCLAQGLSTMLANLFSMRSYIKIEEDTWQKYYLEGVANEMYTEYLSSAFVGLSFPTVCELCYVKLKLLLIAIEYKSEQRESSILINPGNHVKMQEGTLGFFIASDAKEVKRAFFYCKACHDDITDPKRIKKCGCKRIEDEHPSTLSPKKKQRNGGMRNSPNCSPKMMRHDPLLIPGNEQIESMDANVKRYDSTGMFHWCPSKEIEKVILTRSEASMTVLSGHVVVCIFGDVTSALVGLRNLVMPLRASNFHYHELKPIVFVGSLDYLRREWETLHNFPKVFILPGTPLSRADLRAVNINLCDMCVILSANQNNIDDASLQDKECILASLNIKSMQFDDSIGVLQANSQGFTPPGMDRSSPDNSPVHGLVRQASVTTGSNIPIITELVNDSNVQFLDQDDDDDPDTELYLTQPFACGTAFAVSVLDSLMSATYFNDNILTLIRTLVTGGATPELEALLAEENALRGGYSTPQTLANRDRCRVAQLALYDGPFADLGDGGCYGDLFCKALKTYNMLCFGIYRLRDAHLGAPSQCTKRYVITNPPYEFEMVPTDLIFCLMQFDHNAGQSRASLSHSSHSSHSSSKKSSSVHSIPATNRQNRSSKAREARDKQNATRMNRMGPEKRWFTDEAENAYPRNIQIKPMSTHMANQVNQYKSTSSLIPPIREVEDEC.

At 1–39 the chain is on the extracellular side; sequence MSNNINFNKNPDSSVSISKMDVIIPFTPDVPCDNNGQRM. A helical transmembrane segment spans residues 40 to 60; the sequence is WWAFLASSMVTFFGGLFIILL. Residues 61-132 are Cytoplasmic-facing; that stretch reads WRTLKYLWTV…MISAQTLTGR (72 aa). Residues Cys71, Cys72, and Cys74 are each lipidated (S-palmitoyl cysteine). A helical transmembrane segment spans residues 133–153; the sequence is VLVVLVFALSIGALGIYFIDS. Residues 154-168 lie on the Extracellular side of the membrane; the sequence is SDPIESCQNFYKDFT. A helical membrane pass occupies residues 169 to 189; the sequence is LQIDMAFNVFFLLYFGLRFIA. The Cytoplasmic segment spans residues 190 to 193; it reads ANDK. Residues 194-214 form a helical membrane-spanning segment; the sequence is LWFWLEVNSVVDFFTVPPVFV. The Extracellular segment spans residues 215-254; it reads SVYLNRSWLGLRFLRALRLIQFSEILQFLNILKTSNSIKL. The helical transmembrane segment at 255–275 threads the bilayer; it reads VNLCSIFISTWLTAAGFIHLV. Over 276 to 289 the chain is Cytoplasmic; sequence ENSGDPWENFQNSQ. A helical transmembrane segment spans residues 290-310; the sequence is PLSYWECVYLLMVTMSTVGYG. Residues 311–321 lie on the Extracellular side of the membrane; the sequence is DVYARTTLGRL. A helical membrane pass occupies residues 322–342; it reads FMVFFILGGLAMFASYVPEII. The Cytoplasmic segment spans residues 343–1184; that stretch reads ELIGNRKKYG…PPIREVEDEC (842 aa). An RCK N-terminal 1 domain is found at 361–503; sequence RKHIVVCGHI…WNWKEGDDAI (143 aa). Mg(2+) contacts are provided by Glu393, Gln416, and Glu418. Asn468 is a Ca(2+) binding site. Residues 655-677 form a disordered region; the sequence is EHPSTLSPKKKQRNGGMRNSPNC. A Phosphothreonine modification is found at Thr659. Ser661, Ser674, and Ser678 each carry phosphoserine. The region spanning 735–879 is the RCK N-terminal 2 domain; that stretch reads SGHVVVCIFG…MDRSSPDNSP (145 aa). Phosphothreonine is present on Thr866. Phosphoserine occurs at positions 874 and 878. Ca(2+)-binding residues include Gln908, Asp911, Asp914, and Asp916. The short motif at 908–916 is the Calcium bowl element; that stretch reads QFLDQDDDD. A disordered region spans residues 1082–1143; that stretch reads RASLSHSSHS…PEKRWFTDEA (62 aa). The segment covering 1084 to 1104 has biased composition (low complexity); that stretch reads SLSHSSHSSHSSSKKSSSVHS. Residues 1116–1125 are compositionally biased toward basic and acidic residues; that stretch reads KAREARDKQN.

The protein belongs to the potassium channel family. Calcium-activated (TC 1.A.1.3) subfamily. KCa1.1/KCNMA1 sub-subfamily. In terms of assembly, homotetramer; which constitutes the calcium-activated potassium channel. Phosphorylated. Post-translationally, palmitoylated.

It localises to the cell membrane. It carries out the reaction K(+)(in) = K(+)(out). Functionally, potassium channel activated by both membrane depolarization or increase in cytosolic Ca(2+) that mediates export of K(+). It is also activated by the concentration of cytosolic Mg(2+). Its activation dampens the excitatory events that elevate the cytosolic Ca(2+) concentration and/or depolarize the cell membrane. It therefore contributes to repolarization of the membrane potential. Involved in determining peripheral auditory sensitivity. This chain is Calcium-activated potassium channel subunit alpha-1a, found in Danio rerio (Zebrafish).